Here is a 428-residue protein sequence, read N- to C-terminus: Elongation factor 1-alpha (428 aa).

The 213-residue stretch at K5–I217 folds into the tr-type G domain. Residues G14–S21 are G1. GTP is bound at residue G14–S21. S21 is a Mg(2+) binding site. Positions G68–D72 are G2. The segment at D89–G92 is G3. Residues D89–H93 and N144–D147 contribute to the GTP site. Residues N144–D147 form a G4 region. The tract at residues S181 to W183 is G5.

It belongs to the TRAFAC class translation factor GTPase superfamily. Classic translation factor GTPase family. EF-Tu/EF-1A subfamily.

It localises to the cytoplasm. The enzyme catalyses GTP + H2O = GDP + phosphate + H(+). Functionally, GTP hydrolase that promotes the GTP-dependent binding of aminoacyl-tRNA to the A-site of ribosomes during protein biosynthesis. The polypeptide is Elongation factor 1-alpha (Pyrococcus horikoshii (strain ATCC 700860 / DSM 12428 / JCM 9974 / NBRC 100139 / OT-3)).